Here is a 332-residue protein sequence, read N- to C-terminus: Biotin synthase (332 aa).

Residues 53-282 enclose the Radical SAM core domain; it reads YFGKKVKLNM…TKEIRISGGR (230 aa). Residues cysteine 71, cysteine 75, and cysteine 78 each contribute to the [4Fe-4S] cluster site. [2Fe-2S] cluster contacts are provided by cysteine 115, cysteine 147, cysteine 207, and arginine 277.

It belongs to the radical SAM superfamily. Biotin synthase family. Homodimer. [4Fe-4S] cluster serves as cofactor. It depends on [2Fe-2S] cluster as a cofactor.

The catalysed reaction is (4R,5S)-dethiobiotin + (sulfur carrier)-SH + 2 reduced [2Fe-2S]-[ferredoxin] + 2 S-adenosyl-L-methionine = (sulfur carrier)-H + biotin + 2 5'-deoxyadenosine + 2 L-methionine + 2 oxidized [2Fe-2S]-[ferredoxin]. It participates in cofactor biosynthesis; biotin biosynthesis; biotin from 7,8-diaminononanoate: step 2/2. Catalyzes the conversion of dethiobiotin (DTB) to biotin by the insertion of a sulfur atom into dethiobiotin via a radical-based mechanism. This Bacillus thuringiensis (strain Al Hakam) protein is Biotin synthase.